A 428-amino-acid chain; its full sequence is Enolase (428 aa).

Glutamine 162 contacts (2R)-2-phosphoglycerate. The active-site Proton donor is the glutamate 204. Residues aspartate 241, glutamate 282, and aspartate 309 each coordinate Mg(2+). (2R)-2-phosphoglycerate-binding residues include lysine 334, arginine 363, serine 364, and lysine 385. The Proton acceptor role is filled by lysine 334.

Belongs to the enolase family. Requires Mg(2+) as cofactor.

It is found in the cytoplasm. It localises to the secreted. The protein resides in the cell surface. The catalysed reaction is (2R)-2-phosphoglycerate = phosphoenolpyruvate + H2O. Its pathway is carbohydrate degradation; glycolysis; pyruvate from D-glyceraldehyde 3-phosphate: step 4/5. Its function is as follows. Catalyzes the reversible conversion of 2-phosphoglycerate (2-PG) into phosphoenolpyruvate (PEP). It is essential for the degradation of carbohydrates via glycolysis. This Mycobacterium marinum (strain ATCC BAA-535 / M) protein is Enolase.